An 85-amino-acid chain; its full sequence is Arminin 6494 (85 aa).

A signal peptide spans 1–18 (MKTVFAILFLAFIALTYA). Residues 19 to 57 (RSYEDVKEEIKNEVEKEILEDLEEESDELNDKRKEINDA) constitute a propeptide that is removed on maturation. Alanine 82 carries the alanine amide modification.

The protein belongs to the arminin family. Expressed in entodermal epithelium along the body column.

The protein localises to the secreted. It is found in the target cell membrane. Antimicrobial peptide with a broad-spectrum antimicrobial activity. Keeps its antibacterial activity under a wide range of salt concentrations that mimic physiological conditions of human blood, which is surprising, since Hydra is an obligate freshwater animal with nearly no salt tolerance. Does not affect red blood cells. This is Arminin 6494 from Hydra vulgaris (Hydra).